We begin with the raw amino-acid sequence, 131 residues long: Transcription antitermination protein NusB (131 aa).

Belongs to the NusB family.

Functionally, involved in transcription antitermination. Required for transcription of ribosomal RNA (rRNA) genes. Binds specifically to the boxA antiterminator sequence of the ribosomal RNA (rrn) operons. The protein is Transcription antitermination protein NusB of Bacillus pumilus (strain SAFR-032).